We begin with the raw amino-acid sequence, 225 residues long: Type II restriction enzyme BslI subunit alpha (225 aa).

C4-type zinc fingers lie at residues cysteine 36–cysteine 53 and cysteine 63–cysteine 84.

In terms of assembly, heterotetramer of two alpha and two beta subunits. The alpha subunit is believed to be responsible for DNA recognition, while the beta subunit is thought to mediate cleavage. The cofactor is Zn(2+).

It carries out the reaction Endonucleolytic cleavage of DNA to give specific double-stranded fragments with terminal 5'-phosphates.. Its function is as follows. A P subtype restriction enzyme that recognizes the double-stranded sequence 5'-CCN(7)GG-3' and cleaves after N-7. The chain is Type II restriction enzyme BslI subunit alpha from Bacillus sp. (strain NEB-606).